Reading from the N-terminus, the 82-residue chain is Small ribosomal subunit protein uS17 (82 aa).

Belongs to the universal ribosomal protein uS17 family. As to quaternary structure, part of the 30S ribosomal subunit.

One of the primary rRNA binding proteins, it binds specifically to the 5'-end of 16S ribosomal RNA. The polypeptide is Small ribosomal subunit protein uS17 (Paracoccus denitrificans (strain Pd 1222)).